A 545-amino-acid polypeptide reads, in one-letter code: Baeyer-Villiger monooxygenase (545 aa).

The FAD site is built by F24, D45, W54, D65, Y71, and V118.

The protein belongs to the FAD-binding monooxygenase family. Requires FAD as cofactor.

Functionally, catalyzes a Baeyer-Villiger oxidation reaction, i.e. the insertion of an oxygen atom into a carbon-carbon bond adjacent to a carbonyl, which converts ketones to esters or lactones using NADPH as an electron donor. Besides cycloalkanones, can use cyclic alpha,beta-unsaturated ketones as substrates, leading to conjugated ene-lactones. Can also act on methylated cycloalkanones and methylated cycloalkenones with high enantioselectivity in some cases. The chain is Baeyer-Villiger monooxygenase from Pseudooceanicola batsensis (strain ATCC BAA-863 / DSM 15984 / KCTC 12145 / HTCC2597) (Oceanicola batsensis).